The chain runs to 559 residues: 2-succinyl-5-enolpyruvyl-6-hydroxy-3-cyclohexene-1-carboxylate synthase (559 aa).

This sequence belongs to the TPP enzyme family. MenD subfamily. In terms of assembly, homodimer. It depends on Mg(2+) as a cofactor. Mn(2+) serves as cofactor. The cofactor is thiamine diphosphate.

The enzyme catalyses isochorismate + 2-oxoglutarate + H(+) = 5-enolpyruvoyl-6-hydroxy-2-succinyl-cyclohex-3-ene-1-carboxylate + CO2. The protein operates within quinol/quinone metabolism; 1,4-dihydroxy-2-naphthoate biosynthesis; 1,4-dihydroxy-2-naphthoate from chorismate: step 2/7. Its pathway is quinol/quinone metabolism; menaquinone biosynthesis. Functionally, catalyzes the thiamine diphosphate-dependent decarboxylation of 2-oxoglutarate and the subsequent addition of the resulting succinic semialdehyde-thiamine pyrophosphate anion to isochorismate to yield 2-succinyl-5-enolpyruvyl-6-hydroxy-3-cyclohexene-1-carboxylate (SEPHCHC). The polypeptide is 2-succinyl-5-enolpyruvyl-6-hydroxy-3-cyclohexene-1-carboxylate synthase (Cytophaga hutchinsonii (strain ATCC 33406 / DSM 1761 / CIP 103989 / NBRC 15051 / NCIMB 9469 / D465)).